The sequence spans 224 residues: 4'-phosphopantetheinyl transferase ffp (224 aa).

Residues aspartate 107, glutamate 109, and glutamate 151 each contribute to the Mg(2+) site. A peptidyl carrier protein binding region spans residues glycine 158–cysteine 189.

This sequence belongs to the P-Pant transferase superfamily. Gsp/Sfp/HetI/AcpT family. It depends on Mg(2+) as a cofactor.

It carries out the reaction apo-[peptidyl-carrier protein] + CoA = holo-[peptidyl-carrier protein] + adenosine 3',5'-bisphosphate + H(+). Its function is as follows. May activate the peptidyl carrier protein (PCP) domains of fengycin synthase by transferring the 4'-phosphopantetheinyl moiety of coenzyme A (CoA) to a serine residue. The chain is 4'-phosphopantetheinyl transferase ffp (ffp) from Bacillus subtilis.